Consider the following 602-residue polypeptide: Probable translation initiation factor IF-2 (602 aa).

Residues 18–233 (LRTPIVCVMG…LVGLAQRFLK (216 aa)) enclose the tr-type G domain. Residues 27–34 (GHVDHGKT) are G1. Residue 27–34 (GHVDHGKT) participates in GTP binding. The tract at residues 52-56 (AITQH) is G2. The tract at residues 88–91 (DTPG) is G3. Residues 88 to 92 (DTPGH) and 142 to 145 (NKID) contribute to the GTP site. A G4 region spans residues 142–145 (NKID). Residues 210–212 (SAI) form a G5 region.

The protein belongs to the TRAFAC class translation factor GTPase superfamily. Classic translation factor GTPase family. IF-2 subfamily.

Its function is as follows. Function in general translation initiation by promoting the binding of the formylmethionine-tRNA to ribosomes. Seems to function along with eIF-2. In Methanothrix thermoacetophila (strain DSM 6194 / JCM 14653 / NBRC 101360 / PT) (Methanosaeta thermophila), this protein is Probable translation initiation factor IF-2.